A 71-amino-acid polypeptide reads, in one-letter code: Small ribosomal subunit protein bS21 (71 aa).

This sequence belongs to the bacterial ribosomal protein bS21 family.

This is Small ribosomal subunit protein bS21 from Blochmanniella floridana.